The sequence spans 83 residues: Phosphoribosylformylglycinamidine synthase subunit PurS (83 aa).

The protein belongs to the PurS family. Homodimer. Part of the FGAM synthase complex composed of 1 PurL, 1 PurQ and 2 PurS subunits.

Its subcellular location is the cytoplasm. It carries out the reaction N(2)-formyl-N(1)-(5-phospho-beta-D-ribosyl)glycinamide + L-glutamine + ATP + H2O = 2-formamido-N(1)-(5-O-phospho-beta-D-ribosyl)acetamidine + L-glutamate + ADP + phosphate + H(+). The protein operates within purine metabolism; IMP biosynthesis via de novo pathway; 5-amino-1-(5-phospho-D-ribosyl)imidazole from N(2)-formyl-N(1)-(5-phospho-D-ribosyl)glycinamide: step 1/2. Part of the phosphoribosylformylglycinamidine synthase complex involved in the purines biosynthetic pathway. Catalyzes the ATP-dependent conversion of formylglycinamide ribonucleotide (FGAR) and glutamine to yield formylglycinamidine ribonucleotide (FGAM) and glutamate. The FGAM synthase complex is composed of three subunits. PurQ produces an ammonia molecule by converting glutamine to glutamate. PurL transfers the ammonia molecule to FGAR to form FGAM in an ATP-dependent manner. PurS interacts with PurQ and PurL and is thought to assist in the transfer of the ammonia molecule from PurQ to PurL. This is Phosphoribosylformylglycinamidine synthase subunit PurS from Methanocaldococcus jannaschii (strain ATCC 43067 / DSM 2661 / JAL-1 / JCM 10045 / NBRC 100440) (Methanococcus jannaschii).